A 130-amino-acid chain; its full sequence is Small ribosomal subunit protein uS8 (130 aa).

This sequence belongs to the universal ribosomal protein uS8 family. As to quaternary structure, part of the 30S ribosomal subunit.

Functionally, one of the primary rRNA binding proteins, it binds directly to 16S rRNA central domain where it helps coordinate assembly of the platform of the 30S subunit. This is Small ribosomal subunit protein uS8 from Methanobrevibacter smithii (strain ATCC 35061 / DSM 861 / OCM 144 / PS).